Here is a 133-residue protein sequence, read N- to C-terminus: NADPH-dependent 7-cyano-7-deazaguanine reductase (133 aa).

The active-site Thioimide intermediate is cysteine 49. Aspartate 56 acts as the Proton donor in catalysis. Substrate contacts are provided by residues 71-73 and 90-91; these read IEL and HE.

The protein belongs to the GTP cyclohydrolase I family. QueF type 1 subfamily.

The protein resides in the cytoplasm. It catalyses the reaction 7-aminomethyl-7-carbaguanine + 2 NADP(+) = 7-cyano-7-deazaguanine + 2 NADPH + 3 H(+). The protein operates within tRNA modification; tRNA-queuosine biosynthesis. Catalyzes the NADPH-dependent reduction of 7-cyano-7-deazaguanine (preQ0) to 7-aminomethyl-7-deazaguanine (preQ1). In Leptospira borgpetersenii serovar Hardjo-bovis (strain JB197), this protein is NADPH-dependent 7-cyano-7-deazaguanine reductase.